The sequence spans 49 residues: uncharacterized protein (49 aa).

Residues 22–42 form a helical membrane-spanning segment; the sequence is AIVGISIMIIIAIGIYLIIEY.

The protein resides in the membrane. This is an uncharacterized protein from Methanocaldococcus jannaschii (strain ATCC 43067 / DSM 2661 / JAL-1 / JCM 10045 / NBRC 100440) (Methanococcus jannaschii).